A 314-amino-acid chain; its full sequence is Olfactory receptor 1E2 (314 aa).

Over 1–25 (MMGQNQTSISDFLLLGLPIQPEQQN) the chain is Extracellular. The N-linked (GlcNAc...) asparagine glycan is linked to N5. Residues 26 to 49 (LCYALFLAMYLTTLLGNLLIIVLI) form a helical membrane-spanning segment. At 50–57 (RLDSHLHT) the chain is on the cytoplasmic side. Residues 58-79 (PMYLFLSNLSFSDLCFSSVTIP) form a helical membrane-spanning segment. The Extracellular segment spans residues 80–100 (KLLQNMQNQDPSIPYADCLTQ). C97 and C189 are joined by a disulfide. A helical membrane pass occupies residues 101 to 120 (MYFFLLFGDLESFLLVAMAY). Residues 121 to 139 (DRYVAICFPLHYTAIMSPM) are Cytoplasmic-facing. A helical transmembrane segment spans residues 140 to 158 (LCLSLVALSWVLTTFHAML). Residues 159–195 (HTLLMARLCFCADNVIPHFFCDMSALLKLACSDTRVN) lie on the Extracellular side of the membrane. The helical transmembrane segment at 196–219 (EWVIFIMGGLIVVIPFLLILGSYA) threads the bilayer. Residues 220 to 236 (RIVSSILKVPSSKGICK) are Cytoplasmic-facing. Residues 237-259 (AFSTCGSHLSVVSLFYGTIIGLY) form a helical membrane-spanning segment. The Extracellular segment spans residues 260-272 (LCPSANSSTLKET). N-linked (GlcNAc...) asparagine glycosylation occurs at N265. Residues 273–292 (VMAMMYTVVTPMLNPFIYSL) form a helical membrane-spanning segment. Topologically, residues 293–314 (RNRDMKGALERVICKRKNPFLL) are cytoplasmic.

The protein belongs to the G-protein coupled receptor 1 family.

The protein localises to the cell membrane. In terms of biological role, odorant receptor. The protein is Olfactory receptor 1E2 (OR1E2) of Gorilla gorilla gorilla (Western lowland gorilla).